The following is a 106-amino-acid chain: uncharacterized protein (106 aa).

The protein belongs to the HesB/IscA family.

This is an uncharacterized protein from Sinorhizobium fredii (strain NBRC 101917 / NGR234).